The chain runs to 348 residues: Fe(3+) ions import ATP-binding protein FbpC (348 aa).

Positions 7-237 constitute an ABC transporter domain; that stretch reads VELRNVTKRF…PASRFMASFM (231 aa). 39–46 serves as a coordination point for ATP; the sequence is GPSGCGKT.

This sequence belongs to the ABC transporter superfamily. Fe(3+) ion importer (TC 3.A.1.10) family. The complex is composed of two ATP-binding proteins (FbpC), two transmembrane proteins (FbpB) and a solute-binding protein (FbpA).

It is found in the cell inner membrane. It catalyses the reaction Fe(3+)(out) + ATP + H2O = Fe(3+)(in) + ADP + phosphate + H(+). In terms of biological role, part of the ABC transporter complex FbpABC involved in Fe(3+) ions import. Responsible for energy coupling to the transport system. In Escherichia coli (strain K12), this protein is Fe(3+) ions import ATP-binding protein FbpC.